The primary structure comprises 528 residues: UDP-glucuronosyltransferase 1A9 (528 aa).

The N-terminal stretch at 1-23 (MAPVAFPTSFFLCLLLASGLAQA) is a signal peptide. N-linked (GlcNAc...) asparagine glycosylation is present at Asn-69. Lys-97 carries the post-translational modification N6-succinyllysine. 2 N-linked (GlcNAc...) asparagine glycosylation sites follow: Asn-290 and Asn-428. Residues 486-506 (VIGFLLAIVLTVVFIVFKCCA) form a helical membrane-spanning segment.

It belongs to the UDP-glycosyltransferase family. In terms of assembly, homodimer. Homooligomer. Interacts with UGT1A1, UGT1A3, UGT1A4, UGT1A6, UGT1A7, UGT1A8 and UGT1A10 to form heterodimers. In terms of tissue distribution, highly expressed in liver and at lower levels in stomach and kidney.

It localises to the endoplasmic reticulum membrane. It catalyses the reaction glucuronate acceptor + UDP-alpha-D-glucuronate = acceptor beta-D-glucuronoside + UDP + H(+). It carries out the reaction 2-hydroxy-17beta-estradiol + UDP-alpha-D-glucuronate = 2-hydroxy-17beta-estradiol 3-O-(beta-D-glucuronate) + UDP + H(+). The catalysed reaction is 4-hydroxy-17beta-estradiol + UDP-alpha-D-glucuronate = 17beta-estradiol 4-O-(beta-D-glucuronate) + UDP + H(+). The enzyme catalyses 2-hydroxyestrone + UDP-alpha-D-glucuronate = 2-hydroxyestrone 3-O-(beta-D-glucuronate) + UDP + H(+). It catalyses the reaction 4-hydroxyestrone + UDP-alpha-D-glucuronate = estrone 4-O-(beta-D-glucuronate) + UDP + H(+). It carries out the reaction prunetin + UDP-alpha-D-glucuronate = prunetin-5-O-beta-D-glucuronide + UDP. The catalysed reaction is 8-iso-prostaglandin F2alpha + UDP-alpha-D-glucuronate = 8-iso-prostaglandin F2alpha-glucuronide + UDP + H(+). The enzyme catalyses 5-epi-5-F2t-IsoP + UDP-alpha-D-glucuronate = 5-epi-5-F2t-IsoP-glucuronide + UDP + H(+). It catalyses the reaction (5Z,8Z,11Z,14Z)-eicosatetraenoate + UDP-alpha-D-glucuronate = O-[(5Z),(8Z),(11Z),(14Z)-eicosatetraenoyl]-beta-D-glucuronate + UDP. It carries out the reaction 15-hydroxy-(5Z,8Z,11Z,13E)-eicosatetraenoate + UDP-alpha-D-glucuronate = 15-O-(beta-D-glucuronosyl)-(5Z,8Z,11Z,14Z)-eicosatetraenoate + UDP + H(+). The catalysed reaction is prostaglandin B1 + UDP-alpha-D-glucuronate = 15-O-(beta-D-glucuronosyl)-prostaglandin B1 + UDP + H(+). The enzyme catalyses (E)-ferulate + UDP-alpha-D-glucuronate = (E)-4-O-(beta-D-glucuronosyl)-ferulate + UDP + H(+). It catalyses the reaction (E)-ferulate + UDP-alpha-D-glucuronate = (E)-ferulic acid beta-D-glucuronate ester + UDP. It carries out the reaction candesartan + UDP-alpha-D-glucuronate = candesartan O-beta-D-glucuronoside + UDP. The catalysed reaction is SN-38 + UDP-alpha-D-glucuronate = SN-38 O-beta-D-glucuronide + UDP + H(+). The enzyme catalyses mycophenolate + UDP-alpha-D-glucuronate = mycophenolate 7-O-beta-D-glucuronide + UDP + H(+). Functionally, UDP-glucuronosyltransferase (UGT) that catalyzes phase II biotransformation reactions in which lipophilic substrates are conjugated with glucuronic acid to increase the metabolite's water solubility, thereby facilitating excretion into either the urine or bile. Essential for the elimination and detoxification of drugs, xenobiotics and endogenous compounds. Catalyzes the glucuronidation of endogenous estrogen hormones such as estradiol and estrone. Involved in the glucuronidation of arachidonic acid (AA) and AA-derived eicosanoids including 15-HETE, PGB1 and F2-isoprostanes (8-iso-PGF2alpha and 5-epi-5-F2t-IsoP). Glucuronates the phytochemical ferulic acid efficently at both the phenolic or the carboxylic acid group. Also catalyzes the glucuronidation of the isoflavones genistein, daidzein, glycitein, formononetin, biochanin A and prunetin, which are phytoestrogens with anticancer and cardiovascular properties. Involved in the glucuronidation of the AGTR1 angiotensin receptor antagonist caderastan, a drug which can inhibit the effect of angiotensin II. Involved in the biotransformation of 7-ethyl-10-hydroxycamptothecin (SN-38), the pharmacologically active metabolite of the anticancer drug irinotecan. Also metabolizes mycophenolate, an immunosuppressive agent. The protein is UDP-glucuronosyltransferase 1A9 of Mus musculus (Mouse).